The chain runs to 263 residues: Cytochrome c oxidase subunit 3 (263 aa).

The next 7 membrane-spanning stretches (helical) occupy residues 9-29 (PFHM…AMIL), 40-60 (FNMN…IQWW), 84-104 (GMIL…WAFF), 129-149 (IQIP…ITWA), 161-181 (ALQG…LQMY), 198-218 (TFFV…TFLL), and 241-261 (AWYW…IYWW).

The protein belongs to the cytochrome c oxidase subunit 3 family. In terms of assembly, component of the cytochrome c oxidase (complex IV, CIV), a multisubunit enzyme composed of a catalytic core of 3 subunits and several supernumerary subunits. The complex exists as a monomer or a dimer and forms supercomplexes (SCs) in the inner mitochondrial membrane with ubiquinol-cytochrome c oxidoreductase (cytochrome b-c1 complex, complex III, CIII).

It is found in the mitochondrion inner membrane. The enzyme catalyses 4 Fe(II)-[cytochrome c] + O2 + 8 H(+)(in) = 4 Fe(III)-[cytochrome c] + 2 H2O + 4 H(+)(out). Functionally, component of the cytochrome c oxidase, the last enzyme in the mitochondrial electron transport chain which drives oxidative phosphorylation. The respiratory chain contains 3 multisubunit complexes succinate dehydrogenase (complex II, CII), ubiquinol-cytochrome c oxidoreductase (cytochrome b-c1 complex, complex III, CIII) and cytochrome c oxidase (complex IV, CIV), that cooperate to transfer electrons derived from NADH and succinate to molecular oxygen, creating an electrochemical gradient over the inner membrane that drives transmembrane transport and the ATP synthase. Cytochrome c oxidase is the component of the respiratory chain that catalyzes the reduction of oxygen to water. Electrons originating from reduced cytochrome c in the intermembrane space (IMS) are transferred via the dinuclear copper A center (CU(A)) of subunit 2 and heme A of subunit 1 to the active site in subunit 1, a binuclear center (BNC) formed by heme A3 and copper B (CU(B)). The BNC reduces molecular oxygen to 2 water molecules using 4 electrons from cytochrome c in the IMS and 4 protons from the mitochondrial matrix. The polypeptide is Cytochrome c oxidase subunit 3 (COIII) (Locusta migratoria (Migratory locust)).